Consider the following 600-residue polypeptide: Phosphoenolpyruvate carboxykinase (ATP) (600 aa).

An ATP-binding site is contributed by 302 to 309; the sequence is GLSGTGKT.

Belongs to the phosphoenolpyruvate carboxykinase (ATP) family.

The catalysed reaction is oxaloacetate + ATP = phosphoenolpyruvate + ADP + CO2. It functions in the pathway carbohydrate biosynthesis; gluconeogenesis. The polypeptide is Phosphoenolpyruvate carboxykinase (ATP) (acuF) (Emericella nidulans (strain FGSC A4 / ATCC 38163 / CBS 112.46 / NRRL 194 / M139) (Aspergillus nidulans)).